Reading from the N-terminus, the 681-residue chain is Minichromosome maintenance domain-containing protein 2 (681 aa).

The residue at position 292 (serine 292) is a Phosphoserine. Residues 533-621 (RQFTTEDFEK…LIAALLFETS (89 aa)) form the MCM domain.

Its function is as follows. Plays an important role in meiotic recombination and associated DNA double-strand break repair. The polypeptide is Minichromosome maintenance domain-containing protein 2 (MCMDC2) (Homo sapiens (Human)).